The sequence spans 201 residues: Peptide deformylase (201 aa).

The segment at 1 to 21 is disordered; sequence MANHFSQLAKKSRTNGNAEKI. Fe cation contacts are provided by C121 and H163. Residue E164 is part of the active site. Fe cation is bound at residue H167.

It belongs to the polypeptide deformylase family. Fe(2+) is required as a cofactor.

The catalysed reaction is N-terminal N-formyl-L-methionyl-[peptide] + H2O = N-terminal L-methionyl-[peptide] + formate. Removes the formyl group from the N-terminal Met of newly synthesized proteins. Requires at least a dipeptide for an efficient rate of reaction. N-terminal L-methionine is a prerequisite for activity but the enzyme has broad specificity at other positions. This chain is Peptide deformylase, found in Prochlorococcus marinus (strain AS9601).